The sequence spans 187 residues: Ribosome maturation factor RimM (187 aa).

A PRC barrel domain is found at 96-169; it reads EDEFFYADLE…KLVIDPTAAG (74 aa).

Belongs to the RimM family. As to quaternary structure, binds ribosomal protein uS19.

Its subcellular location is the cytoplasm. Its function is as follows. An accessory protein needed during the final step in the assembly of 30S ribosomal subunit, possibly for assembly of the head region. Essential for efficient processing of 16S rRNA. May be needed both before and after RbfA during the maturation of 16S rRNA. It has affinity for free ribosomal 30S subunits but not for 70S ribosomes. This Sinorhizobium medicae (strain WSM419) (Ensifer medicae) protein is Ribosome maturation factor RimM.